The following is a 616-amino-acid chain: Dihydroxy-acid dehydratase (616 aa).

Residue aspartate 81 participates in Mg(2+) binding. Cysteine 122 is a [2Fe-2S] cluster binding site. Residues aspartate 123 and lysine 124 each contribute to the Mg(2+) site. Lysine 124 carries the N6-carboxylysine modification. Residue cysteine 195 coordinates [2Fe-2S] cluster. Residue glutamate 491 participates in Mg(2+) binding. The active-site Proton acceptor is the serine 517.

Belongs to the IlvD/Edd family. In terms of assembly, homodimer. [2Fe-2S] cluster serves as cofactor. It depends on Mg(2+) as a cofactor.

The catalysed reaction is (2R)-2,3-dihydroxy-3-methylbutanoate = 3-methyl-2-oxobutanoate + H2O. It catalyses the reaction (2R,3R)-2,3-dihydroxy-3-methylpentanoate = (S)-3-methyl-2-oxopentanoate + H2O. The protein operates within amino-acid biosynthesis; L-isoleucine biosynthesis; L-isoleucine from 2-oxobutanoate: step 3/4. Its pathway is amino-acid biosynthesis; L-valine biosynthesis; L-valine from pyruvate: step 3/4. Its function is as follows. Functions in the biosynthesis of branched-chain amino acids. Catalyzes the dehydration of (2R,3R)-2,3-dihydroxy-3-methylpentanoate (2,3-dihydroxy-3-methylvalerate) into 2-oxo-3-methylpentanoate (2-oxo-3-methylvalerate) and of (2R)-2,3-dihydroxy-3-methylbutanoate (2,3-dihydroxyisovalerate) into 2-oxo-3-methylbutanoate (2-oxoisovalerate), the penultimate precursor to L-isoleucine and L-valine, respectively. This Salmonella gallinarum (strain 287/91 / NCTC 13346) protein is Dihydroxy-acid dehydratase.